Consider the following 92-residue polypeptide: PqqA binding protein (92 aa).

The protein belongs to the PqqD family. In terms of assembly, monomer. Interacts with PqqE.

The protein operates within cofactor biosynthesis; pyrroloquinoline quinone biosynthesis. Functions as a PqqA binding protein and presents PqqA to PqqE, in the pyrroloquinoline quinone (PQQ) biosynthetic pathway. In Xanthomonas oryzae pv. oryzae (strain PXO99A), this protein is PqqA binding protein.